The sequence spans 325 residues: ATP phosphoribosyltransferase (325 aa).

It belongs to the ATP phosphoribosyltransferase family. Long subfamily. Requires Mg(2+) as cofactor.

Its subcellular location is the cytoplasm. It carries out the reaction 1-(5-phospho-beta-D-ribosyl)-ATP + diphosphate = 5-phospho-alpha-D-ribose 1-diphosphate + ATP. The protein operates within amino-acid biosynthesis; L-histidine biosynthesis; L-histidine from 5-phospho-alpha-D-ribose 1-diphosphate: step 1/9. With respect to regulation, feedback inhibited by histidine. Its function is as follows. Catalyzes the condensation of ATP and 5-phosphoribose 1-diphosphate to form N'-(5'-phosphoribosyl)-ATP (PR-ATP). Has a crucial role in the pathway because the rate of histidine biosynthesis seems to be controlled primarily by regulation of HisG enzymatic activity. In Rhodopseudomonas palustris (strain BisB18), this protein is ATP phosphoribosyltransferase.